The sequence spans 636 residues: Threonine--tRNA ligase (636 aa).

The TGS domain maps to 1–63 (MINITTSFPN…SKDGSVDPVT (63 aa)). The tract at residues 244 to 535 (DHRKIAKDLG…LIEHYAGNIP (292 aa)) is catalytic. Zn(2+) is bound by residues cysteine 335, histidine 386, and histidine 512.

This sequence belongs to the class-II aminoacyl-tRNA synthetase family. As to quaternary structure, homodimer. The cofactor is Zn(2+).

It localises to the cytoplasm. It catalyses the reaction tRNA(Thr) + L-threonine + ATP = L-threonyl-tRNA(Thr) + AMP + diphosphate + H(+). In terms of biological role, catalyzes the attachment of threonine to tRNA(Thr) in a two-step reaction: L-threonine is first activated by ATP to form Thr-AMP and then transferred to the acceptor end of tRNA(Thr). Also edits incorrectly charged L-seryl-tRNA(Thr). The chain is Threonine--tRNA ligase from Anaplasma marginale (strain St. Maries).